The chain runs to 160 residues: Cytochrome b6-f complex subunit 4 (160 aa).

3 helical membrane-spanning segments follow: residues 36-56 (LLYMFPVVIFGSFACVIGLAV), 95-115 (LLGVLLMAAVPAGLLTVPFIE), and 131-151 (TVFLIGTFAAIWLGIGACLPI).

The protein belongs to the cytochrome b family. PetD subfamily. As to quaternary structure, the 4 large subunits of the cytochrome b6-f complex are cytochrome b6, subunit IV (17 kDa polypeptide, petD), cytochrome f and the Rieske protein, while the 4 small subunits are petG, petL, petM and petN. The complex functions as a dimer.

It localises to the plastid. The protein resides in the chloroplast thylakoid membrane. Its function is as follows. Component of the cytochrome b6-f complex, which mediates electron transfer between photosystem II (PSII) and photosystem I (PSI), cyclic electron flow around PSI, and state transitions. This is Cytochrome b6-f complex subunit 4 from Tupiella akineta (Green alga).